Here is an 896-residue protein sequence, read N- to C-terminus: Protein argonaute 9 (896 aa).

In terms of domain architecture, PAZ spans proline 267–serine 380. The 308-residue stretch at phenylalanine 550 to lysine 857 folds into the Piwi domain.

This sequence belongs to the argonaute family. Ago subfamily. Expressed in embryonic shoot apex region, pollen and developing ovules.

Involved in RNA-mediated post-transcriptional gene silencing (PTGS). Main component of the RNA-induced silencing complex (RISC) that binds to a short guide RNA such as a microRNA (miRNA) or small interfering RNA (siRNA). RISC uses the mature miRNA or siRNA as a guide for slicer-directed cleavage of homologous mRNAs to repress gene expression. Associates preferentially with small RNAs of 24 nucleotide in length with a 5' terminal adenosine. Interacts with 24 nucleotide sRNAs derived from transposable elements (TEs). Required to silence pericentrometric-located TEs in female gametes and their accessory cells. Necessary to inactivate a significant proportion of long terminal repeat retrotransposons (LTRs) in the ovule. Required to specify cell fate in ovule. Involved in the control of female gamete formation by restricting the specification of gametophyte precursors in a dosage-dependent, non-cell-autonomous manner. Targeted by turnip yellows virus (TuYV) protein P0 (via F-box-like domain) for probable proteasome degradation and thereby inactivating AGO9 function in RNA silencing. The polypeptide is Protein argonaute 9 (AGO9) (Arabidopsis thaliana (Mouse-ear cress)).